The primary structure comprises 498 residues: MELKDQIKEENEQIAQRKLKLKKRREEGQAYPNDFKRDSLAADLHAVYDQFDSGALTAKAIRVKMAGRMMTRRIMGKASFAHIQDMKGRMQIYVTRDSLPQGVYSDFKSWDLGDIVGIEGELFKTKTEELSVKVDQIRLLTKALRPMPDKFHGLHDQEQRFRQRYLDLIVNESSRHLFQTRSQVIAQIRRFLDDRGYIEVETPMMHPLPGGAAARPFETHHNAMNMDLFLRIAPELYLKRLVVGGFEKVYEINRNFRNEGISTRHNPEFTMLEFYQAYATYEDMMMLTESMIRHLAEKIFGVMEIKYQGVRIDLNKPFPRLSLRDAILQFNPGITPDQIDHLETARELAHKYEIATPAHYGLGKIQTELFEKLVEEKLQQPIFITHFPKEVSPLSRANEENDFITDRFEFYVGGREIANGFSELNDPEDQAARFREQLKARNAGDLEAMSFDEDYITALEYGLPPTAGEGIGIDRLVMLFTDNASIRDVILFPLLRSK.

The Mg(2+) site is built by Glu-409 and Glu-416.

It belongs to the class-II aminoacyl-tRNA synthetase family. Homodimer. Mg(2+) is required as a cofactor.

It localises to the cytoplasm. The enzyme catalyses tRNA(Lys) + L-lysine + ATP = L-lysyl-tRNA(Lys) + AMP + diphosphate. The polypeptide is Lysine--tRNA ligase (Coxiella burnetii (strain CbuK_Q154) (Coxiella burnetii (strain Q154))).